We begin with the raw amino-acid sequence, 404 residues long: Cytoplasmic tRNA 2-thiolation protein 2 (404 aa).

Belongs to the CTU2/NCS2 family.

Its subcellular location is the cytoplasm. Its pathway is tRNA modification; 5-methoxycarbonylmethyl-2-thiouridine-tRNA biosynthesis. In terms of biological role, plays a central role in 2-thiolation of mcm(5)S(2)U at tRNA wobble positions of tRNA(Lys), tRNA(Glu) and tRNA(Gln). May act by forming a heterodimer with NCS6/CTU1 that ligates sulfur from thiocarboxylated URM1 onto the uridine of tRNAs at wobble position. The polypeptide is Cytoplasmic tRNA 2-thiolation protein 2 (Drosophila erecta (Fruit fly)).